The primary structure comprises 602 residues: PEX5-related protein (602 aa).

Disordered stretches follow at residues Val-94–Ser-140 and His-167–Glu-206. Ser-181, Ser-229, Ser-233, and Ser-237 each carry phosphoserine. TPR repeat units lie at residues Trp-302–Asn-335, Ala-336–Asn-369, and Lys-371–Tyr-403. A phosphoserine mark is found at Ser-421 and Ser-423. 3 TPR repeats span residues Pro-450 to Asp-483, Ser-485 to Phe-517, and Arg-519 to Ser-551.

The protein belongs to the peroxisomal targeting signal receptor family. Forms an obligate 4:4 complex with HCN2. Interacts with RAB8B. Interacts with HCN3. Interacts with HCN4 with a 4:4 HCN4:PEX5L stoichiometry; reduces the effects of cAMP on the voltage-dependence and rate of activation of HCN4. Brain specific.

Its subcellular location is the cytoplasm. It is found in the membrane. In terms of biological role, accessory subunit of hyperpolarization-activated cyclic nucleotide-gated (HCN) channels, regulating their cell-surface expression and cyclic nucleotide dependence. In Rattus norvegicus (Rat), this protein is PEX5-related protein (Pex5l).